The primary structure comprises 216 residues: GTP cyclohydrolase-2 (216 aa).

Position 51-55 (51-55 (RIHSE)) interacts with GTP. Zn(2+) contacts are provided by cysteine 56, cysteine 67, and cysteine 69. GTP-binding positions include glutamine 72, 94–96 (EGR), and threonine 116. Aspartate 128 functions as the Proton acceptor in the catalytic mechanism. The active-site Nucleophile is arginine 130. GTP is bound by residues threonine 151 and lysine 156.

The protein belongs to the GTP cyclohydrolase II family. Requires Zn(2+) as cofactor.

It catalyses the reaction GTP + 4 H2O = 2,5-diamino-6-hydroxy-4-(5-phosphoribosylamino)-pyrimidine + formate + 2 phosphate + 3 H(+). The protein operates within cofactor biosynthesis; riboflavin biosynthesis; 5-amino-6-(D-ribitylamino)uracil from GTP: step 1/4. Functionally, catalyzes the conversion of GTP to 2,5-diamino-6-ribosylamino-4(3H)-pyrimidinone 5'-phosphate (DARP), formate and pyrophosphate. The protein is GTP cyclohydrolase-2 of Haemophilus influenzae (strain 86-028NP).